The sequence spans 89 residues: Small ribosomal subunit protein uS15 (89 aa).

Residues 1 to 11 show a composition bias toward basic and acidic residues; sequence MSITAERKAEV. Residues 1 to 24 are disordered; sequence MSITAERKAEVIKTNAKKAGDTGS.

It belongs to the universal ribosomal protein uS15 family. As to quaternary structure, part of the 30S ribosomal subunit. Forms a bridge to the 50S subunit in the 70S ribosome, contacting the 23S rRNA.

Its function is as follows. One of the primary rRNA binding proteins, it binds directly to 16S rRNA where it helps nucleate assembly of the platform of the 30S subunit by binding and bridging several RNA helices of the 16S rRNA. In terms of biological role, forms an intersubunit bridge (bridge B4) with the 23S rRNA of the 50S subunit in the ribosome. This is Small ribosomal subunit protein uS15 from Afipia carboxidovorans (strain ATCC 49405 / DSM 1227 / KCTC 32145 / OM5) (Oligotropha carboxidovorans).